A 324-amino-acid polypeptide reads, in one-letter code: MPLFNSLCWFPTIHVTPPSFILNGIPGLERVHVWISLPLCTMYIIFLVGNLGLVYLIYYEESLHHPMYFFFGHALSLIDLLTCTTTLPNALCIFWFSLKEINFNACLAQMFFVHGFTGVESGVLMLMALDRYVAICYPLRYATTLTNPIIAKAELATFLRGVLLMIPFPFLVKRLPFCQSNIISHTYCDHMSVVKLSCASIKVNVIYGLMVALLIGVFDICCISLSYTLILKAAISLSSSDARQKAFSTCTAHISAIIITYVPAFFTFFAHRFGGHTIPPSLHIIVANLYLLLPPTLNPIVYGVKTKQIRKSVIKFFQGDKGAG.

At 1–33 (MPLFNSLCWFPTIHVTPPSFILNGIPGLERVHV) the chain is on the extracellular side. A helical membrane pass occupies residues 34 to 54 (WISLPLCTMYIIFLVGNLGLV). Over 55 to 62 (YLIYYEES) the chain is Cytoplasmic. A helical transmembrane segment spans residues 63–84 (LHHPMYFFFGHALSLIDLLTCT). At 85-108 (TTLPNALCIFWFSLKEINFNACLA) the chain is on the extracellular side. Cys106 and Cys198 are disulfide-bonded. Residues 109-129 (QMFFVHGFTGVESGVLMLMAL) traverse the membrane as a helical segment. The Cytoplasmic segment spans residues 130–148 (DRYVAICYPLRYATTLTNP). Residues 149-169 (IIAKAELATFLRGVLLMIPFP) form a helical membrane-spanning segment. Residues 170–205 (FLVKRLPFCQSNIISHTYCDHMSVVKLSCASIKVNV) lie on the Extracellular side of the membrane. Residues 206 to 226 (IYGLMVALLIGVFDICCISLS) form a helical membrane-spanning segment. Topologically, residues 227–246 (YTLILKAAISLSSSDARQKA) are cytoplasmic. A helical transmembrane segment spans residues 247 to 267 (FSTCTAHISAIIITYVPAFFT). Residues 268-283 (FFAHRFGGHTIPPSLH) lie on the Extracellular side of the membrane. Residues 284-304 (IIVANLYLLLPPTLNPIVYGV) form a helical membrane-spanning segment. Residues 305-324 (KTKQIRKSVIKFFQGDKGAG) lie on the Cytoplasmic side of the membrane.

Belongs to the G-protein coupled receptor 1 family.

Its subcellular location is the cell membrane. In terms of biological role, odorant receptor. This chain is Olfactory receptor 52N5 (OR52N5), found in Homo sapiens (Human).